Consider the following 1023-residue polypeptide: 2-oxoglutarate dehydrogenase complex component E1 (1023 aa).

The transit peptide at 1-40 (MFHLRTCAAKLRPLTASQTVKTFSQNRPAAARTFQQIRCY) directs the protein to the mitochondrion. N6-succinyllysine is present on Lys74. Residue Ser100 is modified to Phosphoserine. Ca(2+) is bound by residues His143, Asp156, and Asp158. Residue Arg312 participates in thiamine diphosphate binding. At Lys401 the chain carries N6-acetyllysine. 3 residues coordinate thiamine diphosphate: Asp411, Asn444, and Ile446. 3 residues coordinate Mg(2+): Asp411, Asn444, and Ile446. Residue Lys534 forms a Glycyl lysine isopeptide (Lys-Gly) (interchain with G-Cter in ubiquitin) linkage. An N6-succinyllysine modification is found at Lys564. Gln676 provides a ligand contact to thiamine diphosphate. N6-acetyllysine is present on Lys970.

It belongs to the alpha-ketoglutarate dehydrogenase family. Homodimer. The 2-oxoglutarate dehydrogenase complex is composed of OGDH (2-oxoglutarate dehydrogenase; E1), DLST (dihydrolipoamide succinyltransferase; E2), DLD (dihydrolipoamide dehydrogenase; E3) and the assembly factor KGD4. It contains multiple copies of the three enzymatic components (E1, E2 and E3). In the nucleus, the 2-oxoglutarate dehydrogenase complex associates with KAT2A. Interacts with ABHD11; this interaction maintains the functional lipoylation of the 2-oxoglutarate dehydrogenase complex. Thiamine diphosphate is required as a cofactor. It depends on Mg(2+) as a cofactor.

Its subcellular location is the mitochondrion. It is found in the nucleus. It catalyses the reaction N(6)-[(R)-lipoyl]-L-lysyl-[protein] + 2-oxoglutarate + H(+) = N(6)-[(R)-S(8)-succinyldihydrolipoyl]-L-lysyl-[protein] + CO2. With respect to regulation, calcium ions and ADP stimulate, whereas ATP and NADH reduce catalytic activity. Functionally, 2-oxoglutarate dehydrogenase (E1o) component of the 2-oxoglutarate dehydrogenase complex (OGDHC). Participates in the first step, rate limiting for the overall conversion of 2-oxoglutarate to succinyl-CoA and CO(2) catalyzed by the whole OGDHC. Catalyzes the irreversible decarboxylation of 2-oxoglutarate (alpha-ketoglutarate) via the thiamine diphosphate (ThDP) cofactor and subsequent transfer of the decarboxylated acyl intermediate on an oxidized dihydrolipoyl group that is covalently amidated to the E2 enzyme (dihydrolipoyllysine-residue succinyltransferase or DLST). Plays a key role in the Krebs (citric acid) cycle, which is a common pathway for oxidation of fuel molecules, including carbohydrates, fatty acids, and amino acids. Can catalyze the decarboxylation of 2-oxoadipate in vitro, but at a much lower rate than 2-oxoglutarate. Mainly active in the mitochondrion. A fraction of the 2-oxoglutarate dehydrogenase complex also localizes in the nucleus and is required for lysine succinylation of histones: associates with KAT2A on chromatin and provides succinyl-CoA to histone succinyltransferase KAT2A. This Pongo abelii (Sumatran orangutan) protein is 2-oxoglutarate dehydrogenase complex component E1.